Reading from the N-terminus, the 453-residue chain is Chromosomal replication initiator protein DnaA (453 aa).

Residues 1 to 75 are domain I, interacts with DnaA modulators; the sequence is MSENMEELWS…SLKKISGKQL (75 aa). Residues 75-114 form a domain II region; sequence LKIKFLLPGEKIKMEEQNNENEEKPESTSKKSSQGSEHTT. Positions 87–103 are enriched in basic and acidic residues; that stretch reads KMEEQNNENEEKPESTS. Positions 87–112 are disordered; it reads KMEEQNNENEEKPESTSKKSSQGSEH. The interval 115–331 is domain III, AAA+ region; that stretch reads WLNPKYTFDT…GGLIRVIAYS (217 aa). 4 residues coordinate ATP: G159, G161, K162, and T163. The domain IV, binds dsDNA stretch occupies residues 332–453; that stretch reads SMANKKITKE…DEIKNLLHGD (122 aa).

Belongs to the DnaA family. Oligomerizes as a right-handed, spiral filament on DNA at oriC.

Its subcellular location is the cytoplasm. Functionally, plays an essential role in the initiation and regulation of chromosomal replication. ATP-DnaA binds to the origin of replication (oriC) to initiate formation of the DNA replication initiation complex once per cell cycle. Binds the DnaA box (a 9 base pair repeat at the origin) and separates the double-stranded (ds)DNA. Forms a right-handed helical filament on oriC DNA; dsDNA binds to the exterior of the filament while single-stranded (ss)DNA is stabiized in the filament's interior. The ATP-DnaA-oriC complex binds and stabilizes one strand of the AT-rich DNA unwinding element (DUE), permitting loading of DNA polymerase. After initiation quickly degrades to an ADP-DnaA complex that is not apt for DNA replication. Binds acidic phospholipids. This chain is Chromosomal replication initiator protein DnaA, found in Natranaerobius thermophilus (strain ATCC BAA-1301 / DSM 18059 / JW/NM-WN-LF).